We begin with the raw amino-acid sequence, 488 residues long: uncharacterized protein (488 aa).

27–38 (IVHFGFGAFHRA) contacts NAD(+).

It belongs to the mannitol dehydrogenase family. UxuB subfamily.

This is an uncharacterized protein from Escherichia coli (strain K12).